Reading from the N-terminus, the 208-residue chain is Ribosome maturation factor RimP (208 aa).

The tract at residues 165–208 (TAQPKKGQRQGKEPAKESGQKKQLAEAAPRSGSKRSERGSEKRK) is disordered. 2 stretches are compositionally biased toward basic and acidic residues: residues 174 to 188 (QGKE…KKQL) and 198 to 208 (KRSERGSEKRK).

The protein belongs to the RimP family.

It localises to the cytoplasm. Its function is as follows. Required for maturation of 30S ribosomal subunits. This chain is Ribosome maturation factor RimP, found in Sorangium cellulosum (strain So ce56) (Polyangium cellulosum (strain So ce56)).